Consider the following 163-residue polypeptide: Regulatory protein RecX (163 aa).

The tract at residues 1 to 21 is disordered; the sequence is MSDAEDIPTGRKRRPREQTPV.

It belongs to the RecX family.

The protein resides in the cytoplasm. In terms of biological role, modulates RecA activity. In Stenotrophomonas maltophilia (strain R551-3), this protein is Regulatory protein RecX.